The primary structure comprises 270 residues: Phosphonates import ATP-binding protein PhnC 2 (270 aa).

In terms of domain architecture, ABC transporter spans 2-245 (LVVEGLTCRF…IARELYDLEA (244 aa)). An ATP-binding site is contributed by 34-41 (GRSGAGKS).

This sequence belongs to the ABC transporter superfamily. Phosphonates importer (TC 3.A.1.9.1) family. As to quaternary structure, the complex is composed of two ATP-binding proteins (PhnC), two transmembrane proteins (PhnE) and a solute-binding protein (PhnD).

Its subcellular location is the cell inner membrane. The enzyme catalyses phosphonate(out) + ATP + H2O = phosphonate(in) + ADP + phosphate + H(+). Functionally, part of the ABC transporter complex PhnCDE involved in phosphonates import. Responsible for energy coupling to the transport system. The sequence is that of Phosphonates import ATP-binding protein PhnC 2 from Rhodopseudomonas palustris (strain BisA53).